A 91-amino-acid chain; its full sequence is Small ribosomal subunit protein uS19 (91 aa).

Residues 1–32 (MPRSIKKGPFIDEHLDRKVQSAQASNSRRPIK) form a disordered region. Basic and acidic residues predominate over residues 9–19 (PFIDEHLDRKV).

It belongs to the universal ribosomal protein uS19 family.

In terms of biological role, protein S19 forms a complex with S13 that binds strongly to the 16S ribosomal RNA. The polypeptide is Small ribosomal subunit protein uS19 (Acidithiobacillus ferrooxidans (strain ATCC 53993 / BNL-5-31) (Leptospirillum ferrooxidans (ATCC 53993))).